Here is a 245-residue protein sequence, read N- to C-terminus: Adenosine 5'-phosphosulfate reductase (245 aa).

Residues cysteine 124, cysteine 125, cysteine 205, and cysteine 208 each coordinate [4Fe-4S] cluster. Cysteine 231 serves as the catalytic Nucleophile; cysteine thiosulfonate intermediate.

Belongs to the PAPS reductase family. CysH subfamily. Requires [4Fe-4S] cluster as cofactor.

The protein resides in the cytoplasm. The enzyme catalyses [thioredoxin]-disulfide + sulfite + AMP + 2 H(+) = adenosine 5'-phosphosulfate + [thioredoxin]-dithiol. It functions in the pathway sulfur metabolism; hydrogen sulfide biosynthesis; sulfite from sulfate. Functionally, catalyzes the formation of sulfite from adenosine 5'-phosphosulfate (APS) using thioredoxin as an electron donor. This chain is Adenosine 5'-phosphosulfate reductase, found in Chelativorans sp. (strain BNC1).